Consider the following 313-residue polypeptide: Ankyrin repeat family A protein 2 (313 aa).

ANK repeat units lie at residues 148-180 (ANSL…HTDE), 181-213 (EGFT…LLGK), 214-246 (GRES…EYDW), 247-279 (NGGT…IETD), and 280-313 (SGYN…NIKE).

Interacts (via ANK repeats) with CCDC8 (via PxLPxI/L motif); mediates the interaction with the 3M complex which is composed of CCDC8, CUL7 and OBSL1. Interacts (via ANK repeats) with HDAC4 (via PxLPxI/L motif). Interacts (via ANK repeats) with HDAC5 (via PxLPxI/L motif). Interacts (via ANK repeats) with LRP2/megalin (via PxLPxI/L motif). Interacts (via ANK repeats) with RFX7 (via PxLPxI/L motif). Interacts with AHRR. Interacts with NEK6.

It localises to the cytoplasm. The protein resides in the cytoskeleton. Its subcellular location is the membrane. Its function is as follows. May regulate the interaction between the 3M complex and the histone deacetylases HDAC4 and HDAC5. May also regulate LRP2/megalin. The chain is Ankyrin repeat family A protein 2 (ANKRA2) from Homo sapiens (Human).